The primary structure comprises 372 residues: uncharacterized protein (372 aa).

Positions 38-270 (FFIEGGGTKG…ANNIPLDYLI (233 aa)) constitute a PNPLA domain. The short motif at 42–47 (GGGTKG) is the GXGXXG element. The short motif at 74–78 (GTSVG) is the GXSXG element. The active-site Nucleophile is the S76. D257 (proton acceptor) is an active-site residue. Positions 257–259 (DGG) match the DGA/G motif.

Functionally, probable lipid hydrolase. This is an uncharacterized protein from Acanthamoeba polyphaga (Amoeba).